A 490-amino-acid chain; its full sequence is Cytochrome P450 2C28 (490 aa).

Ser-127 carries the phosphoserine modification. An N6-acetyllysine mark is found at Lys-249 and Lys-375. Position 435 (Cys-435) interacts with heme.

It belongs to the cytochrome P450 family. The cofactor is heme. As to expression, liver.

The protein resides in the endoplasmic reticulum membrane. It localises to the microsome membrane. The catalysed reaction is an organic molecule + reduced [NADPH--hemoprotein reductase] + O2 = an alcohol + oxidized [NADPH--hemoprotein reductase] + H2O + H(+). Its function is as follows. Catalyzes the N-demethylation of aminopyrine and benzphetamine, but does not catalyze the hydroxylation of tolbutamide, testosterone, and progesterone. This chain is Cytochrome P450 2C28 (CYP2C28), found in Mesocricetus auratus (Golden hamster).